We begin with the raw amino-acid sequence, 401 residues long: Exodeoxyribonuclease 7 large subunit (401 aa).

Belongs to the XseA family. In terms of assembly, heterooligomer composed of large and small subunits.

It is found in the cytoplasm. It carries out the reaction Exonucleolytic cleavage in either 5'- to 3'- or 3'- to 5'-direction to yield nucleoside 5'-phosphates.. Functionally, bidirectionally degrades single-stranded DNA into large acid-insoluble oligonucleotides, which are then degraded further into small acid-soluble oligonucleotides. The protein is Exodeoxyribonuclease 7 large subunit of Syntrophotalea carbinolica (strain DSM 2380 / NBRC 103641 / GraBd1) (Pelobacter carbinolicus).